We begin with the raw amino-acid sequence, 205 residues long: Glycerol-3-phosphate acyltransferase (205 aa).

5 consecutive transmembrane segments (helical) span residues 4–24, 56–76, 81–101, 112–132, and 138–158; these read IAPG…AILV, VAVL…AYAL, FWLG…VFFG, FGAI…TWLL, and GYSS…VWWF.

This sequence belongs to the PlsY family. In terms of assembly, probably interacts with PlsX.

It is found in the cell inner membrane. It catalyses the reaction an acyl phosphate + sn-glycerol 3-phosphate = a 1-acyl-sn-glycero-3-phosphate + phosphate. It functions in the pathway lipid metabolism; phospholipid metabolism. Functionally, catalyzes the transfer of an acyl group from acyl-phosphate (acyl-PO(4)) to glycerol-3-phosphate (G3P) to form lysophosphatidic acid (LPA). This enzyme utilizes acyl-phosphate as fatty acyl donor, but not acyl-CoA or acyl-ACP. This is Glycerol-3-phosphate acyltransferase from Citrobacter koseri (strain ATCC BAA-895 / CDC 4225-83 / SGSC4696).